Here is a 784-residue protein sequence, read N- to C-terminus: DNA repair and recombination protein RAD54-like (784 aa).

The interval 1 to 54 is disordered; the sequence is MRRSLAPSQRGPMRPESRHSFTPPLLKKNKRSCQQELEREQELDRKRQSALRDA. The tract at residues 2–9 is required for chromatin remodeling, strand pairing activities and coupling of ATPase activity; the sequence is RRSLAPSQ. Serine 20 carries the phosphoserine modification. A Phosphothreonine modification is found at threonine 22. Over residues 36-47 the composition is skewed to basic and acidic residues; it reads ELEREQELDRKR. Positions 172 to 346 constitute a Helicase ATP-binding domain; it reads EGKRGNFNGC…YSLVNFVNPE (175 aa). 185–192 contributes to the ATP binding site; the sequence is DEMGLGKT. A DEGH box motif is present at residues 297–300; that stretch reads DEGH. The Helicase C-terminal domain occupies 503-660; it reads LLDFMLAAIR…NNESAEKHFT (158 aa). The disordered stretch occupies residues 751–784; it reads EEAASEQPEEKPDRRKRPSTPPSDDSADEDFLGF. Positions 775–784 are enriched in acidic residues; that stretch reads DSADEDFLGF.

It belongs to the SNF2/RAD54 helicase family. Interacts (via N-terminus) with spn-A/Rad51.

The protein localises to the nucleus. Its function is as follows. Involved in mitotic DNA repair and meiotic recombination. Functions in the recombinational DNA repair pathway. Essential for interhomolog gene conversion (GC), but may have a less important role in intersister GC than spn-A/Rad51. In the presence of DNA, spn-A/Rad51 enhances the ATPase activity of okr/Rad54. The polypeptide is DNA repair and recombination protein RAD54-like (Drosophila yakuba (Fruit fly)).